A 220-amino-acid chain; its full sequence is Histone deacetylase complex subunit SAP30 (220 aa).

Residues M1–K129 form an interaction with NCOR1 region. T5 carries the phosphothreonine modification. The Atypical zinc finger occupies C67–H115. Residue K87 forms a Glycyl lysine isopeptide (Lys-Gly) (interchain with G-Cter in SUMO2) linkage. Residues R123–I143 are disordered. Residues G130 to H220 form an interaction with SIN3A region. A phosphoserine mark is found at S131 and S138. The residue at position 145 (T145) is a Phosphothreonine. Residues K194 and K214 each participate in a glycyl lysine isopeptide (Lys-Gly) (interchain with G-Cter in SUMO2) cross-link.

Belongs to the SAP30 family. Component of the histone deacetylase complex that includes at least SIN3A, HDAC1 and HDAC2. Found in a complex composed of at least SINHCAF, SIN3A, HDAC1, SAP30, RBBP4, OGT and TET1. Interacts with HDAC1. Interacts with SIN3A, SIN3B, HDAC2, RBBP4 and NCOR1. Interacts directly with SAMSN1. Interacts with HCFC1. Interacts with SAP30BP.

The protein resides in the nucleus. In terms of biological role, involved in the functional recruitment of the Sin3-histone deacetylase complex (HDAC) to a specific subset of N-CoR corepressor complexes. Capable of transcription repression by N-CoR. Active in deacetylating core histone octamers (when in a complex) but inactive in deacetylating nucleosomal histones. This Mus musculus (Mouse) protein is Histone deacetylase complex subunit SAP30.